The chain runs to 61 residues: Small ribosomal subunit protein uS14 (61 aa).

4 residues coordinate Zn(2+): cysteine 24, cysteine 27, cysteine 40, and cysteine 43.

The protein belongs to the universal ribosomal protein uS14 family. Zinc-binding uS14 subfamily. Part of the 30S ribosomal subunit. Contacts proteins S3 and S10. The cofactor is Zn(2+).

Its function is as follows. Binds 16S rRNA, required for the assembly of 30S particles and may also be responsible for determining the conformation of the 16S rRNA at the A site. This is Small ribosomal subunit protein uS14 from Rubrobacter xylanophilus (strain DSM 9941 / JCM 11954 / NBRC 16129 / PRD-1).